A 291-amino-acid chain; its full sequence is MRSLISSLDLTREEVEEILKYAKEFKEGKEETIKASAVLFFSEPSTRTRLSFEKAARELGIETYLVSGSESSTVKGESFFDTLKTFEGLGFDYVVFRVPFVFFPYKEIVKSLNLRLVNAGDGTHQHPSQGLIDFFTIKEHFGEVKDLRVLYVGDIKHSRVFRSGAPLLNMFGAKIGVCGPKTLIPRDVEVFKVDVFDDVDKGIDWADVVIWLRLQKERQKENYIPSESSYFKQFGLTKERFEKVKLYMHPGPVNRNVDIDHELVYTEKSLIQEQVKNGIPVRKAIYKFLWT.

Residues Arg-47 and Thr-48 each contribute to the carbamoyl phosphate site. Lys-75 provides a ligand contact to L-aspartate. Carbamoyl phosphate contacts are provided by Arg-97, His-126, and Gln-129. 2 residues coordinate L-aspartate: Arg-159 and Arg-213. Carbamoyl phosphate contacts are provided by Gly-251 and Pro-252.

This sequence belongs to the aspartate/ornithine carbamoyltransferase superfamily. ATCase family. As to quaternary structure, heterododecamer (2C3:3R2) of six catalytic PyrB chains organized as two trimers (C3), and six regulatory PyrI chains organized as three dimers (R2).

The enzyme catalyses carbamoyl phosphate + L-aspartate = N-carbamoyl-L-aspartate + phosphate + H(+). The protein operates within pyrimidine metabolism; UMP biosynthesis via de novo pathway; (S)-dihydroorotate from bicarbonate: step 2/3. Its function is as follows. Catalyzes the condensation of carbamoyl phosphate and aspartate to form carbamoyl aspartate and inorganic phosphate, the committed step in the de novo pyrimidine nucleotide biosynthesis pathway. The chain is Aspartate carbamoyltransferase catalytic subunit from Aquifex aeolicus (strain VF5).